Consider the following 335-residue polypeptide: Ferredoxin--NADP reductase (335 aa).

The FAD site is built by Asp35, Gln43, Tyr48, Ala88, Phe122, Asp287, and Ser328.

Belongs to the ferredoxin--NADP reductase type 2 family. In terms of assembly, homodimer. Requires FAD as cofactor.

It catalyses the reaction 2 reduced [2Fe-2S]-[ferredoxin] + NADP(+) + H(+) = 2 oxidized [2Fe-2S]-[ferredoxin] + NADPH. The polypeptide is Ferredoxin--NADP reductase (Thermus thermophilus (strain ATCC BAA-163 / DSM 7039 / HB27)).